A 358-amino-acid polypeptide reads, in one-letter code: UDP-N-acetylglucosamine--N-acetylmuramyl-(pentapeptide) pyrophosphoryl-undecaprenol N-acetylglucosamine transferase (358 aa).

Residues serine 197 and glutamine 288 each contribute to the UDP-N-acetyl-alpha-D-glucosamine site.

It belongs to the glycosyltransferase 28 family. MurG subfamily.

It localises to the cell membrane. The catalysed reaction is Mur2Ac(oyl-L-Ala-gamma-D-Glu-L-Lys-D-Ala-D-Ala)-di-trans,octa-cis-undecaprenyl diphosphate + UDP-N-acetyl-alpha-D-glucosamine = beta-D-GlcNAc-(1-&gt;4)-Mur2Ac(oyl-L-Ala-gamma-D-Glu-L-Lys-D-Ala-D-Ala)-di-trans,octa-cis-undecaprenyl diphosphate + UDP + H(+). It participates in cell wall biogenesis; peptidoglycan biosynthesis. Its function is as follows. Cell wall formation. Catalyzes the transfer of a GlcNAc subunit on undecaprenyl-pyrophosphoryl-MurNAc-pentapeptide (lipid intermediate I) to form undecaprenyl-pyrophosphoryl-MurNAc-(pentapeptide)GlcNAc (lipid intermediate II). In Streptococcus agalactiae serotype Ia (strain ATCC 27591 / A909 / CDC SS700), this protein is UDP-N-acetylglucosamine--N-acetylmuramyl-(pentapeptide) pyrophosphoryl-undecaprenol N-acetylglucosamine transferase.